A 426-amino-acid chain; its full sequence is 3-phosphoshikimate 1-carboxyvinyltransferase (426 aa).

3 residues coordinate 3-phosphoshikimate: K22, S23, and R27. K22 lines the phosphoenolpyruvate pocket. Phosphoenolpyruvate is bound by residues G96 and R124. S170, S171, Q172, S198, D314, N337, and K341 together coordinate 3-phosphoshikimate. Q172 is a binding site for phosphoenolpyruvate. Residue D314 is the Proton acceptor of the active site. Residues R345, R387, and K412 each contribute to the phosphoenolpyruvate site.

Belongs to the EPSP synthase family. As to quaternary structure, monomer.

The protein localises to the cytoplasm. It carries out the reaction 3-phosphoshikimate + phosphoenolpyruvate = 5-O-(1-carboxyvinyl)-3-phosphoshikimate + phosphate. Its pathway is metabolic intermediate biosynthesis; chorismate biosynthesis; chorismate from D-erythrose 4-phosphate and phosphoenolpyruvate: step 6/7. Functionally, catalyzes the transfer of the enolpyruvyl moiety of phosphoenolpyruvate (PEP) to the 5-hydroxyl of shikimate-3-phosphate (S3P) to produce enolpyruvyl shikimate-3-phosphate and inorganic phosphate. This Shewanella woodyi (strain ATCC 51908 / MS32) protein is 3-phosphoshikimate 1-carboxyvinyltransferase.